Consider the following 176-residue polypeptide: 2-C-methyl-D-erythritol 2,4-cyclodiphosphate synthase (176 aa).

Residues Asp23, His25, and His60 each contribute to the a divalent metal cation site. Position 23–25 (23–25 (DSH)) interacts with 4-CDP-2-C-methyl-D-erythritol 2-phosphate. A 4-CDP-2-C-methyl-D-erythritol 2-phosphate-binding site is contributed by 149–152 (TSGE).

It belongs to the IspF family. As to quaternary structure, homotrimer. A divalent metal cation serves as cofactor.

It catalyses the reaction 4-CDP-2-C-methyl-D-erythritol 2-phosphate = 2-C-methyl-D-erythritol 2,4-cyclic diphosphate + CMP. Its pathway is isoprenoid biosynthesis; isopentenyl diphosphate biosynthesis via DXP pathway; isopentenyl diphosphate from 1-deoxy-D-xylulose 5-phosphate: step 4/6. Functionally, involved in the biosynthesis of isopentenyl diphosphate (IPP) and dimethylallyl diphosphate (DMAPP), two major building blocks of isoprenoid compounds. Catalyzes the conversion of 4-diphosphocytidyl-2-C-methyl-D-erythritol 2-phosphate (CDP-ME2P) to 2-C-methyl-D-erythritol 2,4-cyclodiphosphate (ME-CPP) with a corresponding release of cytidine 5-monophosphate (CMP). The polypeptide is 2-C-methyl-D-erythritol 2,4-cyclodiphosphate synthase (Chlamydia abortus (strain DSM 27085 / S26/3) (Chlamydophila abortus)).